The following is a 214-amino-acid chain: Probable transaldolase (214 aa).

Catalysis depends on K83, which acts as the Schiff-base intermediate with substrate.

Belongs to the transaldolase family. Type 3B subfamily.

The protein resides in the cytoplasm. It catalyses the reaction D-sedoheptulose 7-phosphate + D-glyceraldehyde 3-phosphate = D-erythrose 4-phosphate + beta-D-fructose 6-phosphate. The protein operates within carbohydrate degradation; pentose phosphate pathway; D-glyceraldehyde 3-phosphate and beta-D-fructose 6-phosphate from D-ribose 5-phosphate and D-xylulose 5-phosphate (non-oxidative stage): step 2/3. Transaldolase is important for the balance of metabolites in the pentose-phosphate pathway. The protein is Probable transaldolase of Geotalea uraniireducens (strain Rf4) (Geobacter uraniireducens).